Here is a 448-residue protein sequence, read N- to C-terminus: N-succinylarginine dihydrolase (448 aa).

Substrate-binding positions include 19-28 (AGLSSGNIAS), Asn-110, and 137-138 (HR). Residue Glu-174 is part of the active site. Position 216 (Arg-216) interacts with substrate. His-252 is a catalytic residue. Residues Asp-254 and Asn-366 each coordinate substrate. Cys-372 serves as the catalytic Nucleophile.

The protein belongs to the succinylarginine dihydrolase family. As to quaternary structure, homodimer.

It carries out the reaction N(2)-succinyl-L-arginine + 2 H2O + 2 H(+) = N(2)-succinyl-L-ornithine + 2 NH4(+) + CO2. Its pathway is amino-acid degradation; L-arginine degradation via AST pathway; L-glutamate and succinate from L-arginine: step 2/5. Its function is as follows. Catalyzes the hydrolysis of N(2)-succinylarginine into N(2)-succinylornithine, ammonia and CO(2). This is N-succinylarginine dihydrolase from Legionella pneumophila (strain Corby).